A 260-amino-acid chain; its full sequence is Large ribosomal subunit protein uL4 (260 aa).

Belongs to the universal ribosomal protein uL4 family. Part of the 50S ribosomal subunit.

Its function is as follows. One of the primary rRNA binding proteins, this protein initially binds near the 5'-end of the 23S rRNA. It is important during the early stages of 50S assembly. It makes multiple contacts with different domains of the 23S rRNA in the assembled 50S subunit and ribosome. In terms of biological role, forms part of the polypeptide exit tunnel. This chain is Large ribosomal subunit protein uL4, found in Methanopyrus kandleri (strain AV19 / DSM 6324 / JCM 9639 / NBRC 100938).